The chain runs to 594 residues: Adenine deaminase 1 (594 aa).

The protein belongs to the metallo-dependent hydrolases superfamily. Adenine deaminase family. Mn(2+) is required as a cofactor.

The enzyme catalyses adenine + H2O + H(+) = hypoxanthine + NH4(+). This chain is Adenine deaminase 1, found in Jannaschia sp. (strain CCS1).